A 169-amino-acid chain; its full sequence is MSVLQVLHIPDERLRKVAKPVEEVNAEIQRIVDDMFETMYAEEGIGLAATQVDIHQRIIVIDVSENRDERLVLINPELLEKSGETGIEEGCLSIPEQRALVPRAEKVKIRALDRDGNPFELEADGLLAICIQHEMDHLVGKLFIDYLSPLKQQRIRQKVEKLDRLNARA.

Fe cation-binding residues include Cys91 and His133. Glu134 is an active-site residue. His137 is a binding site for Fe cation.

This sequence belongs to the polypeptide deformylase family. Fe(2+) serves as cofactor.

It carries out the reaction N-terminal N-formyl-L-methionyl-[peptide] + H2O = N-terminal L-methionyl-[peptide] + formate. In terms of biological role, removes the formyl group from the N-terminal Met of newly synthesized proteins. Requires at least a dipeptide for an efficient rate of reaction. N-terminal L-methionine is a prerequisite for activity but the enzyme has broad specificity at other positions. The polypeptide is Peptide deformylase (Salmonella agona (strain SL483)).